A 313-amino-acid chain; its full sequence is Protein FixB (313 aa).

255-283 (LYLAVGISGQIQHMVGANASQTIFAINKD) lines the FAD pocket.

This sequence belongs to the ETF alpha-subunit/FixB family. Heterodimer of FixA and FixB.

Its pathway is amine and polyamine metabolism; carnitine metabolism. Required for anaerobic carnitine reduction. May bring reductant to CaiA. The sequence is that of Protein FixB from Escherichia coli O81 (strain ED1a).